Here is a 150-residue protein sequence, read N- to C-terminus: Transcriptional repressor NrdR (150 aa).

A zinc finger lies at 3 to 33 (CPFCGGESRVLESRPASDEEAVRRRRECLAC). Residues 48–138 (LIVVKKDGRR…VYREFKDLNE (91 aa)) enclose the ATP-cone domain.

It belongs to the NrdR family. Zn(2+) serves as cofactor.

Its function is as follows. Negatively regulates transcription of bacterial ribonucleotide reductase nrd genes and operons by binding to NrdR-boxes. In Symbiobacterium thermophilum (strain DSM 24528 / JCM 14929 / IAM 14863 / T), this protein is Transcriptional repressor NrdR.